Here is a 432-residue protein sequence, read N- to C-terminus: Enolase (432 aa).

Gln167 is a binding site for (2R)-2-phosphoglycerate. Residue Glu209 is the Proton donor of the active site. Residues Asp246, Glu289, and Asp316 each coordinate Mg(2+). The (2R)-2-phosphoglycerate site is built by Lys341, Arg370, Ser371, and Lys392. Lys341 (proton acceptor) is an active-site residue.

The protein belongs to the enolase family. Mg(2+) is required as a cofactor.

The protein resides in the cytoplasm. It localises to the secreted. It is found in the cell surface. The enzyme catalyses (2R)-2-phosphoglycerate = phosphoenolpyruvate + H2O. It participates in carbohydrate degradation; glycolysis; pyruvate from D-glyceraldehyde 3-phosphate: step 4/5. Catalyzes the reversible conversion of 2-phosphoglycerate (2-PG) into phosphoenolpyruvate (PEP). It is essential for the degradation of carbohydrates via glycolysis. This is Enolase from Petrotoga mobilis (strain DSM 10674 / SJ95).